A 96-amino-acid polypeptide reads, in one-letter code: Aspartyl/glutamyl-tRNA(Asn/Gln) amidotransferase subunit C (96 aa).

It belongs to the GatC family. Heterotrimer of A, B and C subunits.

It carries out the reaction L-glutamyl-tRNA(Gln) + L-glutamine + ATP + H2O = L-glutaminyl-tRNA(Gln) + L-glutamate + ADP + phosphate + H(+). The catalysed reaction is L-aspartyl-tRNA(Asn) + L-glutamine + ATP + H2O = L-asparaginyl-tRNA(Asn) + L-glutamate + ADP + phosphate + 2 H(+). Allows the formation of correctly charged Asn-tRNA(Asn) or Gln-tRNA(Gln) through the transamidation of misacylated Asp-tRNA(Asn) or Glu-tRNA(Gln) in organisms which lack either or both of asparaginyl-tRNA or glutaminyl-tRNA synthetases. The reaction takes place in the presence of glutamine and ATP through an activated phospho-Asp-tRNA(Asn) or phospho-Glu-tRNA(Gln). This Leptospira interrogans serogroup Icterohaemorrhagiae serovar copenhageni (strain Fiocruz L1-130) protein is Aspartyl/glutamyl-tRNA(Asn/Gln) amidotransferase subunit C.